Consider the following 48-residue polypeptide: Large ribosomal subunit protein eL40 (48 aa).

Belongs to the eukaryotic ribosomal protein eL40 family.

This Methanocella arvoryzae (strain DSM 22066 / NBRC 105507 / MRE50) protein is Large ribosomal subunit protein eL40.